Consider the following 97-residue polypeptide: Nucleoid-associated protein HPP12_0031 (97 aa).

Belongs to the YbaB/EbfC family. In terms of assembly, homodimer.

The protein resides in the cytoplasm. Its subcellular location is the nucleoid. Binds to DNA and alters its conformation. May be involved in regulation of gene expression, nucleoid organization and DNA protection. This chain is Nucleoid-associated protein HPP12_0031, found in Helicobacter pylori (strain P12).